The following is a 435-amino-acid chain: Tubulin-like protein TubZ (435 aa).

GTP contacts are provided by residues M25–G26, G124–G126, N185, and N209. The segment at Q403–F435 is disordered.

The protein belongs to the FtsZ family. TubZ subfamily. Polymerizes to form two-stranded filaments and bundles at higher concentration in the presence of GTP. Binds to the TubR-tubC protein DNA complex.

Its subcellular location is the cytoplasm. It carries out the reaction GTP + H2O = GDP + phosphate + H(+). Its activity is regulated as follows. GTPase inhibited by GTP-gamma-S, which also stabilizes filaments. In terms of biological role, a tubulin-like, filament forming GTPase; the motor component of the type III plasmid partition system which ensures correct segregation of the pXO1 plasmid. Essential for plasmid replication. The filaments seed from a DNA centromere-like site (tubC)-TubR complex which extends to surround the TubZ filaments. Highly dynamic filaments grow at the plus end and depolymerize at the minus end, a process called treadmilling. TubR-tubC complexes track the depolymerizing minus end of the filament, probably pulling plasmid within the cell. Has a high GTPase activity; in the presence of GTP assembles into dynamic filaments which bind almost exclusively GDP. Filament formation is cooperative, requiring a critical concentration. Formation occurs very quickly and is followed by disassembly as GTP is consumed. Small amounts of GTP-gamma-S stabilize filaments. Has high GTP and dGTPase activity, 6-fold lower ATPase activity. Forms filaments in the presence of ATP that also disassemble. Weakly binds DNA in a GTP-dependent, non-sequence-specific manner; GTP hydrolysis is not required for DNA-binding. In Bacillus anthracis, this protein is Tubulin-like protein TubZ.